A 306-amino-acid polypeptide reads, in one-letter code: Formamidopyrimidine-DNA glycosylase (306 aa).

The active-site Schiff-base intermediate with DNA is proline 2. Glutamate 3 serves as the catalytic Proton donor. Catalysis depends on lysine 58, which acts as the Proton donor; for beta-elimination activity. Residues histidine 114, arginine 136, and lysine 179 each coordinate DNA. The FPG-type zinc finger occupies 270–306 (SVYDREGEACRTSGCRGTVERIVQAGRSTFYCPHCQK). Residue arginine 296 is the Proton donor; for delta-elimination activity of the active site.

The protein belongs to the FPG family. In terms of assembly, monomer. It depends on Zn(2+) as a cofactor.

It carries out the reaction Hydrolysis of DNA containing ring-opened 7-methylguanine residues, releasing 2,6-diamino-4-hydroxy-5-(N-methyl)formamidopyrimidine.. The catalysed reaction is 2'-deoxyribonucleotide-(2'-deoxyribose 5'-phosphate)-2'-deoxyribonucleotide-DNA = a 3'-end 2'-deoxyribonucleotide-(2,3-dehydro-2,3-deoxyribose 5'-phosphate)-DNA + a 5'-end 5'-phospho-2'-deoxyribonucleoside-DNA + H(+). In terms of biological role, involved in base excision repair of DNA damaged by oxidation or by mutagenic agents. Acts as a DNA glycosylase that recognizes and removes damaged bases. Has a preference for oxidized purines, such as 7,8-dihydro-8-oxoguanine (8-oxoG). Has AP (apurinic/apyrimidinic) lyase activity and introduces nicks in the DNA strand. Cleaves the DNA backbone by beta-delta elimination to generate a single-strand break at the site of the removed base with both 3'- and 5'-phosphates. This is Formamidopyrimidine-DNA glycosylase from Sinorhizobium medicae (strain WSM419) (Ensifer medicae).